We begin with the raw amino-acid sequence, 75 residues long: U6-lycotoxin-Ls1e (75 aa).

The first 21 residues, 1-21 (MKLLLFTALVLVVISLIEVEA), serve as a signal peptide directing secretion. A propeptide spanning residues 22–25 (ENER) is cleaved from the precursor.

The protein belongs to the neurotoxin 19 (CSTX) family. 06 (U6-Lctx) subfamily. In terms of processing, contains 4 disulfide bonds. Expressed by the venom gland.

It is found in the secreted. The chain is U6-lycotoxin-Ls1e from Lycosa singoriensis (Wolf spider).